Here is a 658-residue protein sequence, read N- to C-terminus: Staphylocoagulase (658 aa).

The first 26 residues, 1–26 (MKKQIISLGALAVASSLFTWDNKADA), serve as a signal peptide directing secretion. Polar residues-rich tracts occupy residues 391 to 406 (MEQN…TQPT), 428 to 440 (GTES…QGES), 499 to 514 (PSET…QDGT), and 521 to 531 (PTQNKPSETNA). The tract at residues 391–531 (MEQNRPSLSD…TQNKPSETNA (141 aa)) is disordered. 6 repeat units span residues 492–518 (ARPR…VSYG), 519–545 (ARPT…VSYG), 546–572 (ARPT…VSYG), 573–599 (ARPT…VSYG), 600–626 (ARPT…VSYG), and 627–653 (ARPT…ATYG). The 6 X 27 AA tandem repeats of A-R-P-[RT]-[FQY]-[NK]-K-P-S-[EK]-T-N-A-Y-N-V-T-T-[NH]-[QA]-[DN]-G-[TQ]-[VA]-[ST]-Y-G stretch occupies residues 492 to 653 (ARPRFNKPSE…THADGTATYG (162 aa)). The disordered stretch occupies residues 619 to 658 (ANGQVSYGARPTQKKPSETNAYNVTTHADGTATYGPRVTK). Residues 636 to 646 (ETNAYNVTTHA) show a composition bias toward polar residues.

Belongs to the staphylocoagulase family.

Its function is as follows. Staphylocoagulase is an extracellular protein which specifically forms a complex with human prothrombin. This complex named staphylothrombin can clot fibrinogen without any proteolytic cleavage of prothrombin. In Staphylococcus aureus, this protein is Staphylocoagulase.